Consider the following 222-residue polypeptide: Putative auxin response factor 23 (222 aa).

Residues 126-222 (FTKVLTASDT…ETGELRVGIR (97 aa)) constitute a DNA-binding region (TF-B3).

It belongs to the ARF family. In terms of assembly, homo and heterodimers.

It is found in the nucleus. In terms of biological role, auxin response factors (ARFs) are transcriptional factors that binds specifically to the DNA sequence 5'-TGTCTC-3' found in the auxin-responsive promoter elements (AuxREs). Could act as transcriptional activator or repressor. Formation of heterodimers with Aux/IAA proteins may alter their ability to modulate early auxin response genes expression. This Arabidopsis thaliana (Mouse-ear cress) protein is Putative auxin response factor 23 (ARF23).